Consider the following 282-residue polypeptide: 4-diphosphocytidyl-2-C-methyl-D-erythritol kinase (282 aa).

The active site involves lysine 11. Residue 95 to 105 (PMGGGVGGGSS) participates in ATP binding. Aspartate 137 is a catalytic residue.

This sequence belongs to the GHMP kinase family. IspE subfamily.

It catalyses the reaction 4-CDP-2-C-methyl-D-erythritol + ATP = 4-CDP-2-C-methyl-D-erythritol 2-phosphate + ADP + H(+). It participates in isoprenoid biosynthesis; isopentenyl diphosphate biosynthesis via DXP pathway; isopentenyl diphosphate from 1-deoxy-D-xylulose 5-phosphate: step 3/6. In terms of biological role, catalyzes the phosphorylation of the position 2 hydroxy group of 4-diphosphocytidyl-2C-methyl-D-erythritol. This Haemophilus ducreyi (strain 35000HP / ATCC 700724) protein is 4-diphosphocytidyl-2-C-methyl-D-erythritol kinase.